We begin with the raw amino-acid sequence, 656 residues long: ATP-dependent zinc metalloprotease FtsH (656 aa).

The Cytoplasmic portion of the chain corresponds to 1-10 (MGDNRWLKNS). Residues 11 to 31 (FVYLIILVAALALFFQYLGPG) traverse the membrane as a helical segment. Over 32–116 (ASQTEEKGIA…IVQPAPAWGG (85 aa)) the chain is Extracellular. Residues 117–137 (LLSIFTILLPTLLLIGFFVFF) traverse the membrane as a helical segment. At 138–656 (MRQAQGSNNQ…GLGGPSPLPA (519 aa)) the chain is on the cytoplasmic side. 209 to 216 (GPPGTGKT) contacts ATP. H432 contacts Zn(2+). E433 is a catalytic residue. Residues H436 and D511 each contribute to the Zn(2+) site. The segment covering 622–632 (FSKSGSTTPNG) has biased composition (polar residues). The tract at residues 622–656 (FSKSGSTTPNGRTEDRPAQPDAPQMGLGGPSPLPA) is disordered.

In the central section; belongs to the AAA ATPase family. It in the C-terminal section; belongs to the peptidase M41 family. As to quaternary structure, homohexamer. Zn(2+) serves as cofactor.

It localises to the cell membrane. Acts as a processive, ATP-dependent zinc metallopeptidase for both cytoplasmic and membrane proteins. Plays a role in the quality control of integral membrane proteins. The chain is ATP-dependent zinc metalloprotease FtsH from Chloroflexus aggregans (strain MD-66 / DSM 9485).